The sequence spans 535 residues: Glucans biosynthesis protein D 1 (535 aa).

Residues 1–28 constitute a signal peptide (tat-type signal); the sequence is MHRRDLLKQLAAGFLALAPGLTPSTASA. Residues 275-287 are insert; sequence RTDRAGDRQSAAR.

The protein belongs to the OpgD/OpgG family. Predicted to be exported by the Tat system. The position of the signal peptide cleavage has not been experimentally proven.

It localises to the periplasm. Its pathway is glycan metabolism; osmoregulated periplasmic glucan (OPG) biosynthesis. Functionally, probably involved in the control of the structural glucose backbone of osmoregulated periplasmic glucans (OPGs). The protein is Glucans biosynthesis protein D 1 (opgD1) of Ralstonia nicotianae (strain ATCC BAA-1114 / GMI1000) (Ralstonia solanacearum).